We begin with the raw amino-acid sequence, 182 residues long: Bifunctional protein PyrR (182 aa).

A PRPP-binding motif is present at residues 99–111; it reads VILVDDVLYTGRT.

This sequence belongs to the purine/pyrimidine phosphoribosyltransferase family. PyrR subfamily. Homodimer and homohexamer; in equilibrium.

It catalyses the reaction UMP + diphosphate = 5-phospho-alpha-D-ribose 1-diphosphate + uracil. Regulates transcriptional attenuation of the pyrimidine nucleotide (pyr) operon by binding in a uridine-dependent manner to specific sites on pyr mRNA. This disrupts an antiterminator hairpin in the RNA and favors formation of a downstream transcription terminator, leading to a reduced expression of downstream genes. Its function is as follows. Also displays a weak uracil phosphoribosyltransferase activity which is not physiologically significant. The chain is Bifunctional protein PyrR from Alkaliphilus metalliredigens (strain QYMF).